Here is a 384-residue protein sequence, read N- to C-terminus: Deoxyguanosinetriphosphate triphosphohydrolase-like protein (384 aa).

The region spanning 62 to 198 is the HD domain; sequence RLTHSLEVST…AALADDISYI (137 aa).

This sequence belongs to the dGTPase family. Type 2 subfamily.

In Rickettsia peacockii (strain Rustic), this protein is Deoxyguanosinetriphosphate triphosphohydrolase-like protein.